We begin with the raw amino-acid sequence, 128 residues long: D-ribose pyranase (128 aa).

The active-site Proton donor is the His20. Residues Asp28, His95, and 117-119 contribute to the substrate site; that span reads YSN.

It belongs to the RbsD / FucU family. RbsD subfamily. As to quaternary structure, homodecamer.

The protein localises to the cytoplasm. It catalyses the reaction beta-D-ribopyranose = beta-D-ribofuranose. It functions in the pathway carbohydrate metabolism; D-ribose degradation; D-ribose 5-phosphate from beta-D-ribopyranose: step 1/2. Its function is as follows. Catalyzes the interconversion of beta-pyran and beta-furan forms of D-ribose. This is D-ribose pyranase from Thermosipho africanus (strain TCF52B).